The chain runs to 188 residues: Probable manganese efflux pump MntP (188 aa).

A run of 5 helical transmembrane segments spans residues 3 to 23, 66 to 86, 106 to 128, 143 to 163, and 168 to 188; these read ITAT…ASVG, LEWN…RMII, WLLV…GLAF, ATLI…SIIG, and ILGG…HFHG.

This sequence belongs to the MntP (TC 9.B.29) family.

Its subcellular location is the cell inner membrane. Its function is as follows. Probably functions as a manganese efflux pump. The protein is Probable manganese efflux pump MntP of Shigella sonnei (strain Ss046).